The primary structure comprises 755 residues: Protein MTSS 1 (755 aa).

The region spanning 1 to 250 is the IMD domain; the sequence is MEAVIEKECS…EQVILDLKGS (250 aa). Residues 108–155 are a coiled coil; that stretch reads LQEQMEEWKKVANQLDKDHAKEYKKARQEIKKKSSDTLKLQKKAKKGR. 2 disordered regions span residues 139–159 and 255–305; these read KKSSDTLKLQKKAKKGRGDIQ and SYQT…RSSN. Phosphothreonine is present on T258. Phosphoserine occurs at positions 261, 262, 271, and 322. Residues 327–351 are disordered; the sequence is QDAFQSKSPSPMPPEAPNQLSNGFS. Position 425 is a phosphothreonine (T425). Disordered regions lie at residues 428-470, 490-513, and 563-755; these read RRKE…TRPG, DTQRSSRDSLQCSSGYSTQTTTPC, and QAKR…PRFS. Over residues 443 to 453 the composition is skewed to low complexity; sequence TTASGPPAAAE. T603 is subject to Phosphothreonine. A compositionally biased stretch (low complexity) spans 608 to 623; it reads PIPIKTPVIPVKTPTV. Residues S644 and S647 each carry the phosphoserine modification. Residues 656–671 show a composition bias toward polar residues; that stretch reads GVTSMPSSMWSGQASV. Positions 727 to 744 constitute a WH2 domain; it reads QGEDMLNAIRRGVKLKKT.

This sequence belongs to the MTSS family. In terms of assembly, binds to actin. Binds to the cytoplasmic domain of receptor protein tyrosine phosphatase delta. As to expression, expressed in many tissues, including spleen, thymus, prostate, testis, uterus, colon, and peripheral blood.

Its subcellular location is the cytoplasm. It localises to the cytoskeleton. Functionally, may be related to cancer progression or tumor metastasis in a variety of organ sites, most likely through an interaction with the actin cytoskeleton. The chain is Protein MTSS 1 from Homo sapiens (Human).